Reading from the N-terminus, the 313-residue chain is Intracellular endo-alpha-(1-&gt;5)-L-arabinanase (313 aa).

Residue D27 is the Proton acceptor of the active site. Substrate contacts are provided by residues D27, G105, N144 to D147, and S164 to W166. E201 functions as the Proton donor in the catalytic mechanism. Residue H271 participates in Ca(2+) binding.

It belongs to the glycosyl hydrolase 43 family. In terms of assembly, monomer. The cofactor is Ca(2+).

It localises to the cytoplasm. It carries out the reaction Endohydrolysis of (1-&gt;5)-alpha-arabinofuranosidic linkages in (1-&gt;5)-arabinans.. It participates in glycan metabolism; L-arabinan degradation. Involved in the degradation of arabinan and is a key enzyme in the complete degradation of the plant cell wall. Catalyzes the cleavage of endo alpha-(1-&gt;5)-L-arabinofuranosyl residues in debranched arabinan. The protein is Intracellular endo-alpha-(1-&gt;5)-L-arabinanase (abn-ts) of Geobacillus thermodenitrificans.